A 221-amino-acid polypeptide reads, in one-letter code: Protein RER1D (221 aa).

Helical transmembrane passes span 41–58 (IVRR…YIYR), 64–84 (GYFV…IGFL), 128–148 (FVVA…FWPI), and 149–169 (LLCY…VHMF). Residues 200–221 (KGDGGDDRPSSSNSSQGNEKQD) are disordered. Polar residues predominate over residues 209–221 (SSSNSSQGNEKQD).

Belongs to the RER1 family.

The protein resides in the membrane. In terms of biological role, involved in the retrieval of endoplasmic reticulum membrane proteins from the early Golgi compartment. In Arabidopsis thaliana (Mouse-ear cress), this protein is Protein RER1D.